A 113-amino-acid polypeptide reads, in one-letter code: U11-theraphotoxin-Hhn1a (113 aa).

Residues 1–21 (MNTVRVTFLLVFVLAVSLGRA) form the signal peptide. Positions 22–74 (DKDENRMEMQEKTEQGKSYLDFAENLLLQKLEELEAKLLEEDSEESRNSRQKR) are excised as a propeptide. 3 cysteine pairs are disulfide-bonded: C75/C90, C82/C95, and C89/C110.

The protein belongs to the neurotoxin 14 (magi-1) family. 01 (HNTX-16) subfamily. In terms of tissue distribution, expressed by the venom gland.

The protein localises to the secreted. In terms of biological role, probable ion channel inhibitor. In Cyriopagopus hainanus (Chinese bird spider), this protein is U11-theraphotoxin-Hhn1a.